Here is a 639-residue protein sequence, read N- to C-terminus: ATP-dependent rRNA helicase spb4 (639 aa).

The Q motif signature appears at 14–42 (WDAVTPPLSEWVLEAMSSMGFARMTPVQA). A Helicase ATP-binding domain is found at 45 to 249 (IPLFMAHKDV…RVGLRNPVKI (205 aa)). An ATP-binding site is contributed by 58–65 (AVTGSGKT). A DEAD box motif is present at residues 197-200 (DEAD). The Helicase C-terminal domain occupies 283–437 (ALKNILSSVQ…SISFSDADAT (155 aa)). Disordered regions lie at residues 531–601 (RKEL…ETKE) and 620–639 (AAKAETAKAGGEDEEFKGFD). A coiled-coil region spans residues 561–624 (QNAENKNKKL…RFRQAAAKAE (64 aa)). Residues 577–601 (KLKQEKTKWENMTEEERQKARETKE) are compositionally biased toward basic and acidic residues.

It belongs to the DEAD box helicase family. DDX55/SPB4 subfamily. In terms of assembly, component of pre-60S ribosomal complexes.

It is found in the nucleus. Its subcellular location is the nucleolus. The catalysed reaction is ATP + H2O = ADP + phosphate + H(+). Its function is as follows. ATP-binding RNA helicase involved in the biogenesis of 60S ribosomal subunits. Binds 90S pre-ribosomal particles and dissociates from pre-60S ribosomal particles after processing of 27SB pre-rRNA. Required for the normal formation of 18S rRNA through the processing of pre-rRNAs at sites A0, A1 and A2, and the normal formation of 25S and 5.8S rRNAs through the processing of pre-rRNAs at sites C1 and C2. The chain is ATP-dependent rRNA helicase spb4 from Aspergillus clavatus (strain ATCC 1007 / CBS 513.65 / DSM 816 / NCTC 3887 / NRRL 1 / QM 1276 / 107).